The following is a 202-amino-acid chain: LexA repressor (202 aa).

The H-T-H motif DNA-binding region spans 28 to 48 (RAEIAQRLGFRSPNAAEEHLK). Catalysis depends on for autocatalytic cleavage activity residues Ser119 and Lys156.

Belongs to the peptidase S24 family. As to quaternary structure, homodimer.

It catalyses the reaction Hydrolysis of Ala-|-Gly bond in repressor LexA.. Functionally, represses a number of genes involved in the response to DNA damage (SOS response), including recA and lexA. Binds to the 16 bp palindromic sequence 5'-CTGTATATATATACAG-3'. In the presence of single-stranded DNA, RecA interacts with LexA causing an autocatalytic cleavage which disrupts the DNA-binding part of LexA, leading to derepression of the SOS regulon and eventually DNA repair. The protein is LexA repressor of Cronobacter sakazakii (strain ATCC BAA-894) (Enterobacter sakazakii).